Consider the following 69-residue polypeptide: Light-harvesting protein B-1015 alpha chain (69 aa).

At 2-20 (ATEYRTASWKLWLILDPRR) the chain is on the cytoplasmic side. Residues 21–41 (VLTALFVYLTVIALLIHFGLL) traverse the membrane as a helical segment. His-37 contributes to the a bacteriochlorophyll binding site. Residues 42-59 (STDRLNWWEFQRGLPKAA) are Periplasmic-facing. The propeptide occupies 60–69 (SLVVVPPAVG).

This sequence belongs to the antenna complex alpha subunit family. In terms of assembly, the core complex is formed by different alpha and beta chains, binding bacteriochlorophyll molecules, and arranged most probably in tetrameric structures disposed around the reaction center. The non-pigmented gamma chains may constitute additional components.

It localises to the cell inner membrane. Antenna complexes are light-harvesting systems, which transfer the excitation energy to the reaction centers. This is Light-harvesting protein B-1015 alpha chain (pufA) from Blastochloris viridis (Rhodopseudomonas viridis).